We begin with the raw amino-acid sequence, 262 residues long: Pyridoxine 5'-phosphate synthase (262 aa).

Asparagine 6 is a binding site for 3-amino-2-oxopropyl phosphate. 1-deoxy-D-xylulose 5-phosphate is bound at residue 8 to 9 (DH). A 3-amino-2-oxopropyl phosphate-binding site is contributed by arginine 17. The active-site Proton acceptor is the histidine 42. Residues arginine 44 and histidine 49 each coordinate 1-deoxy-D-xylulose 5-phosphate. The Proton acceptor role is filled by glutamate 69. Residue threonine 99 participates in 1-deoxy-D-xylulose 5-phosphate binding. The active-site Proton donor is histidine 213. 3-amino-2-oxopropyl phosphate-binding positions include glycine 214 and 235–236 (GH).

It belongs to the PNP synthase family. As to quaternary structure, homooctamer; tetramer of dimers.

It is found in the cytoplasm. The enzyme catalyses 3-amino-2-oxopropyl phosphate + 1-deoxy-D-xylulose 5-phosphate = pyridoxine 5'-phosphate + phosphate + 2 H2O + H(+). It participates in cofactor biosynthesis; pyridoxine 5'-phosphate biosynthesis; pyridoxine 5'-phosphate from D-erythrose 4-phosphate: step 5/5. Catalyzes the complicated ring closure reaction between the two acyclic compounds 1-deoxy-D-xylulose-5-phosphate (DXP) and 3-amino-2-oxopropyl phosphate (1-amino-acetone-3-phosphate or AAP) to form pyridoxine 5'-phosphate (PNP) and inorganic phosphate. This chain is Pyridoxine 5'-phosphate synthase, found in Wolinella succinogenes (strain ATCC 29543 / DSM 1740 / CCUG 13145 / JCM 31913 / LMG 7466 / NCTC 11488 / FDC 602W) (Vibrio succinogenes).